A 228-amino-acid chain; its full sequence is Putative N-acetylmannosamine-6-phosphate 2-epimerase (228 aa).

This sequence belongs to the NanE family.

It catalyses the reaction an N-acyl-D-glucosamine 6-phosphate = an N-acyl-D-mannosamine 6-phosphate. The protein operates within amino-sugar metabolism; N-acetylneuraminate degradation; D-fructose 6-phosphate from N-acetylneuraminate: step 3/5. In terms of biological role, converts N-acetylmannosamine-6-phosphate (ManNAc-6-P) to N-acetylglucosamine-6-phosphate (GlcNAc-6-P). The chain is Putative N-acetylmannosamine-6-phosphate 2-epimerase from Mycoplasmopsis pulmonis (strain UAB CTIP) (Mycoplasma pulmonis).